Here is a 143-residue protein sequence, read N- to C-terminus: Putative pre-16S rRNA nuclease (143 aa).

The protein belongs to the YqgF nuclease family.

It localises to the cytoplasm. In terms of biological role, could be a nuclease involved in processing of the 5'-end of pre-16S rRNA. In Salinibacter ruber (strain DSM 13855 / M31), this protein is Putative pre-16S rRNA nuclease.